The following is a 214-amino-acid chain: UPF0758 protein (214 aa).

Residues 92-214 form the MPN domain; the sequence is VLSSWQALLD…ELSFRAEGLL (123 aa). Residues H163, H165, and D176 each contribute to the Zn(2+) site. A JAMM motif motif is present at residues 163-176; that stretch reads HNHPSGDPTPSQAD.

This sequence belongs to the UPF0758 family.

This is UPF0758 protein from Rhodobacter capsulatus (Rhodopseudomonas capsulata).